A 233-amino-acid chain; its full sequence is Uracil-DNA glycosylase (233 aa).

Asp70 acts as the Proton acceptor in catalysis.

Belongs to the uracil-DNA glycosylase (UDG) superfamily. UNG family.

The protein localises to the cytoplasm. It catalyses the reaction Hydrolyzes single-stranded DNA or mismatched double-stranded DNA and polynucleotides, releasing free uracil.. Its function is as follows. Excises uracil residues from the DNA which can arise as a result of misincorporation of dUMP residues by DNA polymerase or due to deamination of cytosine. This Helicobacter pylori (strain Shi470) protein is Uracil-DNA glycosylase.